The primary structure comprises 183 residues: Large ribosomal subunit protein uL6 (183 aa).

It belongs to the universal ribosomal protein uL6 family. Part of the 50S ribosomal subunit.

This protein binds to the 23S rRNA, and is important in its secondary structure. It is located near the subunit interface in the base of the L7/L12 stalk, and near the tRNA binding site of the peptidyltransferase center. In Chlamydia muridarum (strain MoPn / Nigg), this protein is Large ribosomal subunit protein uL6.